Consider the following 97-residue polypeptide: Small ribosomal subunit protein eS25 (97 aa).

The segment at 1 to 24 (MAPAASGAKKQKKKWSKGKVKDKA) is disordered. Residues 9 to 18 (KKQKKKWSKG) show a composition bias toward basic residues.

Belongs to the eukaryotic ribosomal protein eS25 family. In terms of assembly, component of the small ribosomal subunit (SSU). Mature N.crassa ribosomes consist of a small (40S) and a large (60S) subunit. The 40S small subunit contains 1 molecule of ribosomal RNA (18S rRNA) and at least 32 different proteins. The large 60S subunit contains 3 rRNA molecules (26S, 5.8S and 5S rRNA) and at least 42 different proteins.

Its subcellular location is the cytoplasm. Functionally, component of the ribosome, a large ribonucleoprotein complex responsible for the synthesis of proteins in the cell. The small ribosomal subunit (SSU) binds messenger RNAs (mRNAs) and translates the encoded message by selecting cognate aminoacyl-transfer RNA (tRNA) molecules. The large subunit (LSU) contains the ribosomal catalytic site termed the peptidyl transferase center (PTC), which catalyzes the formation of peptide bonds, thereby polymerizing the amino acids delivered by tRNAs into a polypeptide chain. The nascent polypeptides leave the ribosome through a tunnel in the LSU and interact with protein factors that function in enzymatic processing, targeting, and the membrane insertion of nascent chains at the exit of the ribosomal tunnel. This is Small ribosomal subunit protein eS25 (rps-25) from Neurospora crassa (strain ATCC 24698 / 74-OR23-1A / CBS 708.71 / DSM 1257 / FGSC 987).